A 294-amino-acid chain; its full sequence is Cytidine deaminase (294 aa).

CMP/dCMP-type deaminase domains follow at residues Asp48–Lys168 and Leu186–Ala294. Asn89–Glu91 is a binding site for substrate. Residue His102 participates in Zn(2+) binding. Glu104 (proton donor) is an active-site residue. Zn(2+)-binding residues include Cys129 and Cys132.

Belongs to the cytidine and deoxycytidylate deaminase family. In terms of assembly, homodimer. Requires Zn(2+) as cofactor.

It catalyses the reaction cytidine + H2O + H(+) = uridine + NH4(+). It carries out the reaction 2'-deoxycytidine + H2O + H(+) = 2'-deoxyuridine + NH4(+). Functionally, this enzyme scavenges exogenous and endogenous cytidine and 2'-deoxycytidine for UMP synthesis. The protein is Cytidine deaminase of Escherichia coli (strain K12).